The chain runs to 331 residues: PTS-dependent dihydroxyacetone kinase 2, dihydroxyacetone-binding subunit DhaK (331 aa).

Positions 7 to 328 constitute a DhaK domain; sequence DGYEAVEEML…LDTPCDTPYF (322 aa). Residues 55 to 58 and D111 contribute to the dihydroxyacetone site; that span reads GSGH. H58 (proton acceptor) is an active-site residue. The active-site Tele-hemiaminal-histidine intermediate is the H218.

As to quaternary structure, homodimer. The dihydroxyacetone kinase complex is composed of a homodimer of DhaM, a homodimer of DhaK and the subunit DhaL.

The protein localises to the cytoplasm. It carries out the reaction dihydroxyacetone + phosphoenolpyruvate = dihydroxyacetone phosphate + pyruvate. It functions in the pathway polyol metabolism; glycerol degradation. Functionally, dihydroxyacetone binding subunit of the dihydroxyacetone kinase, which is responsible for the phosphoenolpyruvate (PEP)-dependent phosphorylation of dihydroxyacetone via a phosphoryl group transfer from DhaL-ATP. The chain is PTS-dependent dihydroxyacetone kinase 2, dihydroxyacetone-binding subunit DhaK from Listeria innocua serovar 6a (strain ATCC BAA-680 / CLIP 11262).